Here is a 232-residue protein sequence, read N- to C-terminus: Octanoyltransferase (232 aa).

Residues 44–219 (EYTADEIWVV…QLARQFGLVL (176 aa)) enclose the BPL/LPL catalytic domain. Substrate contacts are provided by residues 83–90 (RGGQVTYH), 150–152 (ALG), and 163–165 (GLS). The Acyl-thioester intermediate role is filled by C181.

Belongs to the LipB family.

Its subcellular location is the cytoplasm. It catalyses the reaction octanoyl-[ACP] + L-lysyl-[protein] = N(6)-octanoyl-L-lysyl-[protein] + holo-[ACP] + H(+). It participates in protein modification; protein lipoylation via endogenous pathway; protein N(6)-(lipoyl)lysine from octanoyl-[acyl-carrier-protein]: step 1/2. Functionally, catalyzes the transfer of endogenously produced octanoic acid from octanoyl-acyl-carrier-protein onto the lipoyl domains of lipoate-dependent enzymes. Lipoyl-ACP can also act as a substrate although octanoyl-ACP is likely to be the physiological substrate. This chain is Octanoyltransferase, found in Xanthomonas axonopodis pv. citri (strain 306).